We begin with the raw amino-acid sequence, 392 residues long: Caveolae-associated protein 1 (392 aa).

The residue at position 1 (methionine 1) is an N-acetylmethionine. Over residues 1-10 the composition is skewed to basic and acidic residues; it reads MEDVTLHIVE. The disordered stretch occupies residues 1 to 45; that stretch reads MEDVTLHIVERPYSGYPDASSEGPEPTPGEARATEEPSGTGSDEL. The interval 1–100 is required for homotrimerization and for interaction with CAVIN2 and CAVIN3; the sequence is MEDVTLHIVE…IQGELSKLGK (100 aa). Phosphoserine is present on residues serine 21 and serine 38. Threonine 40 bears the Phosphothreonine mark. Serine 42 and serine 48 each carry phosphoserine. Positions 54–64 are nuclear export signal; that stretch reads VLVLSLLDKII. Residues 55-77 are leucine-zipper 1; sequence LVLSLLDKIIGAVDQIQLTQAQL. Lysine 118 is covalently cross-linked (Glycyl lysine isopeptide (Lys-Gly) (interchain with G-Cter in SUMO2)). The residue at position 120 (serine 120) is a Phosphoserine. Lysine 124 participates in a covalent cross-link: Glycyl lysine isopeptide (Lys-Gly) (interchain with G-Cter in SUMO2). The tract at residues 138-154 is nuclear localization signal; sequence KKLEVNEAELLRRRNFK. Tyrosine 158 carries the phosphotyrosine modification. A Glycyl lysine isopeptide (Lys-Gly) (interchain with G-Cter in SUMO1); alternate cross-link involves residue lysine 163. Lysine 163 participates in a covalent cross-link: Glycyl lysine isopeptide (Lys-Gly) (interchain with G-Cter in SUMO2); alternate. A Glycyl lysine isopeptide (Lys-Gly) (interchain with G-Cter in SUMO2) cross-link involves residue lysine 167. A leucine-zipper 2 region spans residues 168–188; sequence LSVSKSLKESEALPEKEGDEL. Phosphoserine occurs at positions 169 and 171. A Glycyl lysine isopeptide (Lys-Gly) (interchain with G-Cter in SUMO2) cross-link involves residue lysine 172. A phosphoserine mark is found at serine 173 and serine 177. The segment covering 173 to 183 has biased composition (basic and acidic residues); it reads SLKESEALPEK. The interval 173-198 is disordered; that stretch reads SLKESEALPEKEGDELGEGERPEEDA. A compositionally biased stretch (acidic residues) spans 184 to 198; that stretch reads EGDELGEGERPEEDA. Positions 201–284 form a coiled coil; that stretch reads IELSSDEAVE…RMNKLGTRLV (84 aa). Residues serine 204 and serine 205 each carry the phosphoserine modification. A nuclear localization signal region spans residues 235–251; it reads KKAFSKEKMEKTKVRTR. Positions 259–299 are leucine-zipper 3; sequence LKTKENLEKTRHTLEKRMNKLGTRLVPVERREKLKTSRDKL. Residue serine 302 is modified to Phosphoserine. Threonine 304 is modified (phosphothreonine). Tyrosine 310 carries the post-translational modification Phosphotyrosine. Residue lysine 328 forms a Glycyl lysine isopeptide (Lys-Gly) (interchain with G-Cter in SUMO2) linkage. Positions 347-367 are disordered; that stretch reads GPDDDEVGAERGAETDLLRGS. The segment covering 354 to 363 has biased composition (basic and acidic residues); that stretch reads GAERGAETDL. 5 positions are modified to phosphoserine: serine 367, serine 368, serine 381, serine 389, and serine 391.

This sequence belongs to the CAVIN family. In terms of assembly, component of the CAVIN complex composed of CAVIN1, CAVIN2, CAVIN3 and CAVIN4. Interacts with RNA polymerase I subunit POLR1A/RPA1 and TTF1. Binds the 3' end of pre-rRNA. Interacts with transcription factor ZNF148. Interacts with LIPE in the adipocyte cytoplasm. Interacts with CAV1, CAV3, CAVIN2, CAVIN3 and CAVIN4. Post-translationally, phosphorylated. Present in active and inactive forms. Changes in phosphorylation pattern may alter activity. Phosphorylation at Tyr-158 is essential for its function in the regulation of ribosomal transcriptional activity. Monoubiquitinated. In terms of tissue distribution, expressed in the adipocyte (at protein level). Expressed in all striated and smooth muscles tested including diaphragm, esophageal striated muscle, fibroblast, endocardial endothelium, epicardial mesothelium, intestinal smooth muscle, masseter, soleus muscle, vascular smooth muscle and white gastrocnemius muscle (at protein level). Expressed in the endothelium and perineural sheath (at protein level). Not expressed in hepatocytes.

The protein resides in the membrane. Its subcellular location is the caveola. It is found in the cell membrane. It localises to the microsome. The protein localises to the endoplasmic reticulum. The protein resides in the cytoplasm. Its subcellular location is the cytosol. It is found in the mitochondrion. It localises to the nucleus. Plays an important role in caveolae formation and organization. Essential for the formation of caveolae in all tissues. Core component of the CAVIN complex which is essential for recruitment of the complex to the caveolae in presence of calveolin-1 (CAV1). Essential for normal oligomerization of CAV1. Promotes ribosomal transcriptional activity in response to metabolic challenges in the adipocytes and plays an important role in the formation of the ribosomal transcriptional loop. Dissociates transcription complexes paused by DNA-bound TTF1, thereby releasing both RNA polymerase I and pre-RNA from the template. The caveolae biogenesis pathway is required for the secretion of proteins such as GASK1A. The sequence is that of Caveolae-associated protein 1 from Rattus norvegicus (Rat).